Reading from the N-terminus, the 555-residue chain is Urocanate hydratase (555 aa).

NAD(+) contacts are provided by residues 52–53 (GG), glutamine 130, 176–178 (GMG), glutamate 196, arginine 201, 242–243 (NA), 263–267 (QTSAH), 273–274 (YL), and tyrosine 322. Residue cysteine 410 is part of the active site. NAD(+) is bound at residue glycine 492.

This sequence belongs to the urocanase family. NAD(+) is required as a cofactor.

The protein resides in the cytoplasm. It catalyses the reaction 4-imidazolone-5-propanoate = trans-urocanate + H2O. Its pathway is amino-acid degradation; L-histidine degradation into L-glutamate; N-formimidoyl-L-glutamate from L-histidine: step 2/3. Its function is as follows. Catalyzes the conversion of urocanate to 4-imidazolone-5-propionate. The chain is Urocanate hydratase from Shewanella baltica (strain OS223).